The following is a 203-amino-acid chain: MQNAPESVLNALVPMVVEQTAKGERSYDIYSRLLKERVIFLVGQVEEHMANLIVAQLLFLESENPDQEISLYINSPGGSVTAGMAIYDTMQFIKPNVSTVCIGQAASMGAFLLAGGAKGKRHCLPNSRVMIHQPLGGFQGQASDFAIHAQEILGIKNKLNNILAEHTGQPLEVIERDTDRDNFMSAAQAAEYGLVDSVFEQRG.

Catalysis depends on Ser-107, which acts as the Nucleophile. His-132 is an active-site residue.

It belongs to the peptidase S14 family. As to quaternary structure, fourteen ClpP subunits assemble into 2 heptameric rings which stack back to back to give a disk-like structure with a central cavity, resembling the structure of eukaryotic proteasomes.

Its subcellular location is the cytoplasm. The catalysed reaction is Hydrolysis of proteins to small peptides in the presence of ATP and magnesium. alpha-casein is the usual test substrate. In the absence of ATP, only oligopeptides shorter than five residues are hydrolyzed (such as succinyl-Leu-Tyr-|-NHMec, and Leu-Tyr-Leu-|-Tyr-Trp, in which cleavage of the -Tyr-|-Leu- and -Tyr-|-Trp bonds also occurs).. In terms of biological role, cleaves peptides in various proteins in a process that requires ATP hydrolysis. Has a chymotrypsin-like activity. Plays a major role in the degradation of misfolded proteins. The polypeptide is ATP-dependent Clp protease proteolytic subunit (Shewanella woodyi (strain ATCC 51908 / MS32)).